Consider the following 201-residue polypeptide: Ribonuclease HII (201 aa).

One can recognise an RNase H type-2 domain in the interval 12-201 (DLVAGVDEVG…VRELLDVSVQ (190 aa)). A divalent metal cation is bound by residues aspartate 18, glutamate 19, and aspartate 110.

This sequence belongs to the RNase HII family. Requires Mn(2+) as cofactor. It depends on Mg(2+) as a cofactor.

Its subcellular location is the cytoplasm. The enzyme catalyses Endonucleolytic cleavage to 5'-phosphomonoester.. Endonuclease that specifically degrades the RNA of RNA-DNA hybrids. This chain is Ribonuclease HII, found in Pseudomonas aeruginosa (strain LESB58).